Here is a 415-residue protein sequence, read N- to C-terminus: Histidine--tRNA ligase (415 aa).

This sequence belongs to the class-II aminoacyl-tRNA synthetase family. As to quaternary structure, homodimer.

The protein resides in the cytoplasm. The catalysed reaction is tRNA(His) + L-histidine + ATP = L-histidyl-tRNA(His) + AMP + diphosphate + H(+). The chain is Histidine--tRNA ligase from Rickettsia bellii (strain RML369-C).